The primary structure comprises 290 residues: Protease HtpX homolog (290 aa).

The next 2 membrane-spanning stretches (helical) occupy residues 4–24 and 39–59; these read IFLFIATNIAVIAVMSVVLSL and PMLLVFSLVVGFTGSIISLLI. His-144 provides a ligand contact to Zn(2+). Residue Glu-145 is part of the active site. His-148 serves as a coordination point for Zn(2+). The next 2 helical transmembrane spans lie at 159-179 and 197-217; these read LVQGVVNTFVVFLSRVVGYFV and ITVIVSQIVFGIAASVIVAWF. A Zn(2+)-binding site is contributed by Glu-222.

It belongs to the peptidase M48B family. Zn(2+) serves as cofactor.

Its subcellular location is the cell inner membrane. This chain is Protease HtpX homolog, found in Janthinobacterium sp. (strain Marseille) (Minibacterium massiliensis).